A 905-amino-acid polypeptide reads, in one-letter code: DNA mismatch repair protein MutS (905 aa).

The segment at 388 to 410 is disordered; that stretch reads LERPANPEGTYPTDAETSGDTLP. 638–645 is an ATP binding site; that stretch reads GPNMAGKS. The segment at 826-847 is disordered; it reads RDAARGTNSAPSRQTLPGLDLP. Polar residues predominate over residues 831–840; that stretch reads GTNSAPSRQT.

It belongs to the DNA mismatch repair MutS family.

Its function is as follows. This protein is involved in the repair of mismatches in DNA. It is possible that it carries out the mismatch recognition step. This protein has a weak ATPase activity. The protein is DNA mismatch repair protein MutS of Nitratidesulfovibrio vulgaris (strain DP4) (Desulfovibrio vulgaris).